A 217-amino-acid polypeptide reads, in one-letter code: UPF0323 lipoprotein HPP12_0232 (217 aa).

Residues 1 to 27 form the signal peptide; sequence MKKPYRKISDYAIVGGLSALVMVSIVG. Cys28 carries the N-palmitoyl cysteine lipid modification. Residue Cys28 is the site of S-diacylglycerol cysteine attachment. Residues 160 to 171 show a composition bias toward polar residues; that stretch reads QRTYKSPQAYQR. The segment at 160–217 is disordered; the sequence is QRTYKSPQAYQRSQNSFSKSAPSASSMGTASKGQSGFFGSSRPTSSPAISSGTRGFNS. Residues 172–185 show a composition bias toward low complexity; it reads SQNSFSKSAPSASS. Polar residues predominate over residues 186–197; the sequence is MGTASKGQSGFF. Residues 199–210 show a composition bias toward low complexity; that stretch reads SSRPTSSPAISS.

This sequence belongs to the UPF0323 family.

The protein resides in the cell membrane. This is UPF0323 lipoprotein HPP12_0232 from Helicobacter pylori (strain P12).